Consider the following 130-residue polypeptide: Small ribosomal subunit protein uS8 (130 aa).

This sequence belongs to the universal ribosomal protein uS8 family. As to quaternary structure, part of the 30S ribosomal subunit.

Its function is as follows. One of the primary rRNA binding proteins, it binds directly to 16S rRNA central domain where it helps coordinate assembly of the platform of the 30S subunit. This is Small ribosomal subunit protein uS8 from Methanotorris igneus (Methanococcus igneus).